Consider the following 55-residue polypeptide: Large ribosomal subunit protein bL33 (55 aa).

The protein belongs to the bacterial ribosomal protein bL33 family.

The polypeptide is Large ribosomal subunit protein bL33 (Rhodopseudomonas palustris (strain HaA2)).